Reading from the N-terminus, the 102-residue chain is CRISPR-associated endoribonuclease Cas2 (102 aa).

A Mg(2+)-binding site is contributed by Asp8.

Belongs to the CRISPR-associated endoribonuclease Cas2 protein family. As to quaternary structure, homodimer, forms a heterotetramer with a Cas1 homodimer. The cofactor is Mg(2+).

In terms of biological role, CRISPR (clustered regularly interspaced short palindromic repeat), is an adaptive immune system that provides protection against mobile genetic elements (viruses, transposable elements and conjugative plasmids). CRISPR clusters contain sequences complementary to antecedent mobile elements and target invading nucleic acids. CRISPR clusters are transcribed and processed into CRISPR RNA (crRNA). Functions as a ssRNA-specific endoribonuclease. Involved in the integration of spacer DNA into the CRISPR cassette. The protein is CRISPR-associated endoribonuclease Cas2 of Acidovorax ebreus (strain TPSY) (Diaphorobacter sp. (strain TPSY)).